Here is a 1679-residue protein sequence, read N- to C-terminus: Maestro heat-like repeat-containing protein family member 2A (1679 aa).

15 HEAT repeats span residues 68-91 (ATTDPCVVMNALIRCLQMPEISTQ), 92-128 (RKMNIYNIMQEIIQQEGEMEEHCIQRLVAIASKQMRD), 190-229 (MPYMGITLATIFTMLRLANEAKMRQVICSAMETFCETVQF), 293-313 (EQVYDYIPLLLAEFQGTGHWP), 314-350 (LFPSLLQVLRQILEASVTTNTPIPPMLLHPIFTELHV), 380-417 (SYPKELMKFFFSQVEMSKEAVRVGTLALIRAVVSADDP), 422-459 (KTIYLAIRVVKNTLSDTRSKVRMAILRIIGQLVLSGFQ), 571-610 (PAPQKLLARLLVLMSSPYKGEGRGIAMLNLLRTLSQSIAP), 614-654 (DMWE…SLKK), 737-774 (KTVLNVLQDFEERIQESEQSWQIGAWRKDHPWRRETVK), 848-887 (SALTGLIVVIIKAEPPDHLVSPVRSMAMDALSQLSTMKPF), 991-1028 (GQFGVLVGLIAPCTCDAHRRTRLASINVLSSLLDLHVS), 1219-1261 (DPLM…SHGP), 1387-1425 (KLLRPVVLMLEKGAGQDKDETLQVLSLRALGNMALGAPR), and 1632-1669 (MDLVGLRNSLQDLQLDSDAGVRRAALETLKVLDSCNQH).

The chain is Maestro heat-like repeat-containing protein family member 2A (Mroh2a) from Mus musculus (Mouse).